The primary structure comprises 130 residues: Small ribosomal subunit protein uS8 (130 aa).

The protein belongs to the universal ribosomal protein uS8 family.

The polypeptide is Small ribosomal subunit protein uS8 (RPS22A) (Eremothecium gossypii (strain ATCC 10895 / CBS 109.51 / FGSC 9923 / NRRL Y-1056) (Yeast)).